Reading from the N-terminus, the 50-residue chain is Sperm protamine P1 (50 aa).

It belongs to the protamine P1 family. Testis.

The protein resides in the nucleus. The protein localises to the chromosome. Its function is as follows. Protamines substitute for histones in the chromatin of sperm during the haploid phase of spermatogenesis. They compact sperm DNA into a highly condensed, stable and inactive complex. The polypeptide is Sperm protamine P1 (PRM1) (Natalus stramineus (Mexican funnel-eared bat)).